The following is a 547-amino-acid chain: Aspartate 1-decarboxylase (547 aa).

Lys338 carries the N6-(pyridoxal phosphate)lysine modification.

It belongs to the group II decarboxylase family. The cofactor is pyridoxal 5'-phosphate.

It carries out the reaction L-aspartate + H(+) = beta-alanine + CO2. The protein operates within cofactor biosynthesis; (R)-pantothenate biosynthesis; beta-alanine from L-aspartate: step 1/1. In terms of biological role, catalyzes the pyridoxal-dependent decarboxylation of aspartate to produce beta-alanine. Has weak activity with glutamate. The chain is Aspartate 1-decarboxylase from Aliivibrio fischeri (strain ATCC 700601 / ES114) (Vibrio fischeri).